We begin with the raw amino-acid sequence, 411 residues long: Ornithine aminotransferase (411 aa).

K257 carries the post-translational modification N6-(pyridoxal phosphate)lysine.

Belongs to the class-III pyridoxal-phosphate-dependent aminotransferase family. OAT subfamily. Requires pyridoxal 5'-phosphate as cofactor.

It is found in the cytoplasm. The catalysed reaction is a 2-oxocarboxylate + L-ornithine = L-glutamate 5-semialdehyde + an L-alpha-amino acid. It participates in amino-acid biosynthesis; L-proline biosynthesis; L-glutamate 5-semialdehyde from L-ornithine: step 1/1. Catalyzes the interconversion of ornithine to glutamate semialdehyde. This Bordetella bronchiseptica (strain ATCC BAA-588 / NCTC 13252 / RB50) (Alcaligenes bronchisepticus) protein is Ornithine aminotransferase.